The primary structure comprises 86 residues: Small ribosomal subunit protein eS21 (86 aa).

The protein belongs to the eukaryotic ribosomal protein eS21 family. Component of the 40S small ribosomal subunit.

The protein resides in the cytoplasm. It localises to the cytosol. Its subcellular location is the rough endoplasmic reticulum. The chain is Small ribosomal subunit protein eS21 (RPS21) from Suberites domuncula (Sponge).